A 1032-amino-acid polypeptide reads, in one-letter code: uncharacterized protein (1032 aa).

Residues 1-17 are Cytoplasmic-facing; sequence MYEEIRMKFTDIFIRRP. The chain crosses the membrane as a helical span at residues 18–36; the sequence is VLAVSISLLMIILGLQAIS. Topologically, residues 37–337 are periplasmic; that stretch reads KLAVREYPKM…TIAINSSIHE (301 aa). The helical transmembrane segment at 338–357 threads the bilayer; it reads VIKTIGEATLIVLVVILMFI. Over 358-363 the chain is Cytoplasmic; the sequence is GSFRAI. Residues 364–383 traverse the membrane as a helical segment; sequence LIPILAIPISLIGVLMLLQS. The Periplasmic portion of the chain corresponds to 384 to 389; the sequence is FNFSIN. A helical transmembrane segment spans residues 390 to 411; it reads LMTLLALILAIGLVVDDAIVVL. The Cytoplasmic portion of the chain corresponds to 412–438; sequence ENIDRHIKAGETPFRAAIIGTREIAVP. A helical transmembrane segment spans residues 439 to 457; sequence VISMTIALIAVYSPMALMG. The Periplasmic segment spans residues 458-470; that stretch reads GITGTLFKEFALT. The chain crosses the membrane as a helical span at residues 471 to 493; that stretch reads LAGAVFISGVVALTLSPMMSSKL. The Cytoplasmic portion of the chain corresponds to 494–529; it reads LKSNAKPTWMEERVEHTLGKVNRVYEYMLDLVMLNR. The chain crosses the membrane as a helical span at residues 530–548; that stretch reads KSMLAFAVVIFSTLPFLFN. Residues 549-852 lie on the Periplasmic side of the membrane; that stretch reads SLSSELTPNE…ARQLVQEGNA (304 aa). The helical transmembrane segment at 853-872 threads the bilayer; the sequence is LAVTFALAVIIIFLVLAIQF. Residues 873–878 lie on the Cytoplasmic side of the membrane; it reads ESIRDP. A helical membrane pass occupies residues 879 to 898; that stretch reads MVIMISVPLAVSGALVSLNI. Over 899 to 910 the chain is Periplasmic; the sequence is LSFFSIAGTTLN. The chain crosses the membrane as a helical span at residues 911–932; that stretch reads IYSQVGLITLVGLITKHGILMC. Residues 933-960 are Cytoplasmic-facing; that stretch reads EVAKEEQLNHGKTRIEAITHAAKVRLRP. The chain crosses the membrane as a helical span at residues 961-979; sequence ILMTTAAMVAGLIPLLYAT. The Periplasmic segment spans residues 980-992; the sequence is GAGAVSRFSIGIV. A helical membrane pass occupies residues 993–1015; that stretch reads IVAGLSIGTIFTLFVLPVVYSYV. Over 1016–1032 the chain is Cytoplasmic; the sequence is ATEHKPLPVFDENKTTH.

This sequence belongs to the resistance-nodulation-cell division (RND) (TC 2.A.6) family.

The protein resides in the cell inner membrane. Its function is as follows. Could be a drug efflux pump. This is an uncharacterized protein from Haemophilus influenzae (strain ATCC 51907 / DSM 11121 / KW20 / Rd).